The primary structure comprises 497 residues: Acetyl-coenzyme A carboxylase carboxyl transferase subunit beta, chloroplastic (497 aa).

Residues 230-497 (LWVQCENCYG…FFPVNSNSIK (268 aa)) enclose the CoA carboxyltransferase N-terminal domain. Positions 234, 237, 253, and 256 each coordinate Zn(2+). The C4-type zinc-finger motif lies at 234 to 256 (CENCYGLNYKKFFRSKFNICEQC).

Belongs to the AccD/PCCB family. As to quaternary structure, acetyl-CoA carboxylase is a heterohexamer composed of biotin carboxyl carrier protein, biotin carboxylase and 2 subunits each of ACCase subunit alpha and ACCase plastid-coded subunit beta (accD). Requires Zn(2+) as cofactor.

Its subcellular location is the plastid. It is found in the chloroplast stroma. It carries out the reaction N(6)-carboxybiotinyl-L-lysyl-[protein] + acetyl-CoA = N(6)-biotinyl-L-lysyl-[protein] + malonyl-CoA. The protein operates within lipid metabolism; malonyl-CoA biosynthesis; malonyl-CoA from acetyl-CoA: step 1/1. Component of the acetyl coenzyme A carboxylase (ACC) complex. Biotin carboxylase (BC) catalyzes the carboxylation of biotin on its carrier protein (BCCP) and then the CO(2) group is transferred by the transcarboxylase to acetyl-CoA to form malonyl-CoA. In Nandina domestica (Heavenly bamboo), this protein is Acetyl-coenzyme A carboxylase carboxyl transferase subunit beta, chloroplastic.